The chain runs to 387 residues: Erythronate-4-phosphate dehydrogenase (387 aa).

Substrate is bound by residues serine 45 and threonine 67. Aspartate 147 serves as a coordination point for NAD(+). Arginine 208 is an active-site residue. NAD(+) is bound at residue aspartate 232. Glutamate 237 is a catalytic residue. Histidine 254 functions as the Proton donor in the catalytic mechanism. Glycine 257 is a binding site for NAD(+). Tyrosine 258 provides a ligand contact to substrate.

This sequence belongs to the D-isomer specific 2-hydroxyacid dehydrogenase family. PdxB subfamily. Homodimer.

It localises to the cytoplasm. The catalysed reaction is 4-phospho-D-erythronate + NAD(+) = (R)-3-hydroxy-2-oxo-4-phosphooxybutanoate + NADH + H(+). It participates in cofactor biosynthesis; pyridoxine 5'-phosphate biosynthesis; pyridoxine 5'-phosphate from D-erythrose 4-phosphate: step 2/5. Catalyzes the oxidation of erythronate-4-phosphate to 3-hydroxy-2-oxo-4-phosphonooxybutanoate. The polypeptide is Erythronate-4-phosphate dehydrogenase (Shewanella violacea (strain JCM 10179 / CIP 106290 / LMG 19151 / DSS12)).